We begin with the raw amino-acid sequence, 541 residues long: NAD(P)H-quinone oxidoreductase subunit 2 A, chloroplastic (541 aa).

Transmembrane regions (helical) follow at residues 24-44 (LLLFDGSLIFPECILIFGLIL), 57-77 (IPWLYFIPSTSLVMSITALLF), 99-119 (IFQFLILLCSTLCIPLSVEYI), 124-144 (MAITEFLLFVLTATLGGMFLC), 149-169 (FITIFVAPECFSLCSYLLSGY), 183-203 (YLLMGGASSSILVHGFSWLYG), 227-247 (PGISIALIFITVGIGFKLSPA), 289-309 (ILSPTPVVAFLSVTSKVAASA), 326-346 (WHLLLEILAILSMILGNLIAI), 354-374 (MLAYSSIGQIGYVIIGIIVGD), 385-405 (YMLFYISMNLGTFACIVLFGL), 426-446 (ALSLALCLLSLGGLPPLAGFF), 449-469 (LYLFWCGWQAGLYFLVLIGLL), and 515-535 (MIVCVIASTIPGISMNPIIAI).

Belongs to the complex I subunit 2 family. NDH is composed of at least 16 different subunits, 5 of which are encoded in the nucleus.

The protein resides in the plastid. The protein localises to the chloroplast thylakoid membrane. The enzyme catalyses a plastoquinone + NADH + (n+1) H(+)(in) = a plastoquinol + NAD(+) + n H(+)(out). The catalysed reaction is a plastoquinone + NADPH + (n+1) H(+)(in) = a plastoquinol + NADP(+) + n H(+)(out). NDH shuttles electrons from NAD(P)H:plastoquinone, via FMN and iron-sulfur (Fe-S) centers, to quinones in the photosynthetic chain and possibly in a chloroplast respiratory chain. The immediate electron acceptor for the enzyme in this species is believed to be plastoquinone. Couples the redox reaction to proton translocation, and thus conserves the redox energy in a proton gradient. The chain is NAD(P)H-quinone oxidoreductase subunit 2 A, chloroplastic from Coffea arabica (Arabian coffee).